Reading from the N-terminus, the 811-residue chain is Glycerol-3-phosphate acyltransferase (811 aa).

The short motif at 303–308 is the HXXXXD motif element; the sequence is CHRSHM.

It belongs to the GPAT/DAPAT family.

The protein localises to the cell inner membrane. It carries out the reaction sn-glycerol 3-phosphate + an acyl-CoA = a 1-acyl-sn-glycero-3-phosphate + CoA. It participates in phospholipid metabolism; CDP-diacylglycerol biosynthesis; CDP-diacylglycerol from sn-glycerol 3-phosphate: step 1/3. This Glaesserella parasuis serovar 5 (strain SH0165) (Haemophilus parasuis) protein is Glycerol-3-phosphate acyltransferase.